Reading from the N-terminus, the 200-residue chain is UPF0301 protein Veis_1517 (200 aa).

It belongs to the UPF0301 (AlgH) family.

In Verminephrobacter eiseniae (strain EF01-2), this protein is UPF0301 protein Veis_1517.